We begin with the raw amino-acid sequence, 199 residues long: 3-isopropylmalate dehydratase small subunit (199 aa).

This sequence belongs to the LeuD family. LeuD type 1 subfamily. As to quaternary structure, heterodimer of LeuC and LeuD.

The enzyme catalyses (2R,3S)-3-isopropylmalate = (2S)-2-isopropylmalate. The protein operates within amino-acid biosynthesis; L-leucine biosynthesis; L-leucine from 3-methyl-2-oxobutanoate: step 2/4. In terms of biological role, catalyzes the isomerization between 2-isopropylmalate and 3-isopropylmalate, via the formation of 2-isopropylmaleate. This is 3-isopropylmalate dehydratase small subunit from Tolumonas auensis (strain DSM 9187 / NBRC 110442 / TA 4).